The following is an 805-amino-acid chain: Na(+)/H(+) antiporter subunit A (805 aa).

A run of 21 helical transmembrane segments spans residues Leu4–Tyr22, His29–Ile51, Ser80–Leu102, Leu109–Leu128, Leu132–Phe154, Met167–Gly189, Phe209–Ile231, Ser244–Val266, Ala271–Val293, Gly300–Ala322, Pro332–Gly354, Leu375–Ala397, Ile431–Phe453, Ile474–Ile496, Gly529–Met551, Tyr597–Phe614, Ile629–Asn651, Ala656–Phe674, Leu679–Leu701, Asn714–Leu736, and Met778–Ile795.

It belongs to the CPA3 antiporters (TC 2.A.63) subunit A family. In terms of assembly, forms a heterooligomeric complex that consists of seven subunits: MrpA, MrpB, MrpC, MrpD, MrpE, MrpF and MrpG.

It is found in the cell membrane. Its function is as follows. Mnh complex is a Na(+)Li(+)/H(+) antiporter involved in Na(+) and/or Li(+) excretion and Na(+) resistance. Na(+)/H(+) antiport consumes a transmembrane electrical potential, and is thus inferred to be electrogenic. Does not transport K(+), Ca(2+) or Mg(2+). The protein is Na(+)/H(+) antiporter subunit A (mrpA) of Alkalihalophilus pseudofirmus (strain ATCC BAA-2126 / JCM 17055 / OF4) (Bacillus pseudofirmus).